Reading from the N-terminus, the 223-residue chain is UPF0502 protein Shew185_1758 (223 aa).

The protein belongs to the UPF0502 family.

The sequence is that of UPF0502 protein Shew185_1758 from Shewanella baltica (strain OS185).